A 272-amino-acid polypeptide reads, in one-letter code: Putative pyruvate, phosphate dikinase regulatory protein (272 aa).

ADP is bound at residue 154–161 (GVSRTSKS).

It belongs to the pyruvate, phosphate/water dikinase regulatory protein family. PDRP subfamily.

It catalyses the reaction N(tele)-phospho-L-histidyl/L-threonyl-[pyruvate, phosphate dikinase] + ADP = N(tele)-phospho-L-histidyl/O-phospho-L-threonyl-[pyruvate, phosphate dikinase] + AMP + H(+). The catalysed reaction is N(tele)-phospho-L-histidyl/O-phospho-L-threonyl-[pyruvate, phosphate dikinase] + phosphate + H(+) = N(tele)-phospho-L-histidyl/L-threonyl-[pyruvate, phosphate dikinase] + diphosphate. Its function is as follows. Bifunctional serine/threonine kinase and phosphorylase involved in the regulation of the pyruvate, phosphate dikinase (PPDK) by catalyzing its phosphorylation/dephosphorylation. This is Putative pyruvate, phosphate dikinase regulatory protein from Wolbachia sp. subsp. Brugia malayi (strain TRS).